The chain runs to 142 residues: HTH-type transcriptional regulator MntR (142 aa).

The HTH dtxR-type domain maps to 1 to 63; the sequence is MPTPSMEDYI…YEKYRGLILT (63 aa). Residues D8, E11, H77, E99, E102, and H103 each contribute to the Mn(2+) site.

This sequence belongs to the DtxR/MntR family. In terms of assembly, homodimer.

The protein resides in the cytoplasm. DNA binding is strongly activated by Mn(2+). In terms of biological role, central regulator of manganese homeostasis. In Listeria welshimeri serovar 6b (strain ATCC 35897 / DSM 20650 / CCUG 15529 / CIP 8149 / NCTC 11857 / SLCC 5334 / V8), this protein is HTH-type transcriptional regulator MntR.